A 479-amino-acid polypeptide reads, in one-letter code: Ribulose bisphosphate carboxylase large chain (479 aa).

Positions 1-2 (MS) are excised as a propeptide. Residues asparagine 123 and threonine 173 each coordinate substrate. Lysine 175 functions as the Proton acceptor in the catalytic mechanism. Residue lysine 177 participates in substrate binding. Mg(2+) contacts are provided by lysine 201, aspartate 203, and glutamate 204. Lysine 201 bears the N6-carboxylysine mark. Serine 208 is subject to Phosphoserine. Catalysis depends on histidine 294, which acts as the Proton acceptor. 2 residues coordinate substrate: arginine 295 and histidine 327. Position 330 is a phosphothreonine (threonine 330). Residue serine 379 participates in substrate binding.

It belongs to the RuBisCO large chain family. Type I subfamily. In terms of assembly, heterohexadecamer of 8 large chains and 8 small chains; disulfide-linked. The disulfide link is formed within the large subunit homodimers. The cofactor is Mg(2+). Post-translationally, the disulfide bond which can form in the large chain dimeric partners within the hexadecamer appears to be associated with oxidative stress and protein turnover.

The protein resides in the plastid. It is found in the chloroplast. The enzyme catalyses 2 (2R)-3-phosphoglycerate + 2 H(+) = D-ribulose 1,5-bisphosphate + CO2 + H2O. It carries out the reaction D-ribulose 1,5-bisphosphate + O2 = 2-phosphoglycolate + (2R)-3-phosphoglycerate + 2 H(+). In terms of biological role, ruBisCO catalyzes two reactions: the carboxylation of D-ribulose 1,5-bisphosphate, the primary event in carbon dioxide fixation, as well as the oxidative fragmentation of the pentose substrate in the photorespiration process. Both reactions occur simultaneously and in competition at the same active site. This Barbarea verna (Land cress) protein is Ribulose bisphosphate carboxylase large chain.